Here is a 364-residue protein sequence, read N- to C-terminus: Flagellar P-ring protein (364 aa).

Residues 1-29 (MKTIGGKVFRHAAILAACVLPLWCQPALA) form the signal peptide.

The protein belongs to the FlgI family. As to quaternary structure, the basal body constitutes a major portion of the flagellar organelle and consists of four rings (L,P,S, and M) mounted on a central rod.

It localises to the periplasm. The protein resides in the bacterial flagellum basal body. In terms of biological role, assembles around the rod to form the L-ring and probably protects the motor/basal body from shearing forces during rotation. The sequence is that of Flagellar P-ring protein from Dechloromonas aromatica (strain RCB).